A 1249-amino-acid chain; its full sequence is Clustered mitochondria protein homolog (1249 aa).

The tract at residues 1–34 (MAQTNGELEHSKAETPEQLTNGNHPEETQEEEQN) is disordered. One can recognise a Clu domain in the interval 321–565 (DITRSQENYL…RVTPLDVMWQ (245 aa)). Disordered stretches follow at residues 610-638 (VETA…EALD) and 874-907 (VPAT…PEKP). Positions 613–638 (ASKEKSEENAESKEEGSEEKSEEALD) are enriched in basic and acidic residues. 3 TPR repeats span residues 975–1008 (AKLY…TERT), 1017–1050 (ILSY…WKII), and 1059–1092 (ITTM…CESL). Residues 1178-1191 (TRTLGTKVQPQVGQ) show a composition bias toward polar residues. Residues 1178-1249 (TRTLGTKVQP…KLRGSKKSSA (72 aa)) are disordered. Low complexity predominate over residues 1192–1205 (SAPSASGASSANPS).

This sequence belongs to the CLU family. As to quaternary structure, may associate with the eukaryotic translation initiation factor 3 (eIF-3) complex.

Its subcellular location is the cytoplasm. Functionally, mRNA-binding protein involved in proper cytoplasmic distribution of mitochondria. This chain is Clustered mitochondria protein homolog, found in Aspergillus oryzae (strain ATCC 42149 / RIB 40) (Yellow koji mold).